Reading from the N-terminus, the 1681-residue chain is Sodium channel protein type 7 subunit alpha (1681 aa).

Over 1–118 (MLTSPEPKGL…RRAAIKALVH (118 aa)) the chain is Cytoplasmic. The stretch at 101–402 (TLSPLNSLRR…ILTMTYEKEK (302 aa)) is one I repeat. The helical transmembrane segment at 119–138 (PLFRLLILISVLTDSILMCM) threads the bilayer. At 139-142 (SNLP) the chain is on the extracellular side. A helical membrane pass occupies residues 143–168 (EWILAIENTLLGIYAFEILVKVIARG). Over 169-179 (IWAGSFSFLGD) the chain is Cytoplasmic. The chain crosses the membrane as a helical span at residues 180-197 (LWNWLDFSVTLFELITRF). Residues 198 to 201 (SPLS) are Extracellular-facing. A helical membrane pass occupies residues 202-220 (SFLMLKTIRTFRILKIIPL). The Cytoplasmic segment spans residues 221 to 238 (NHGLQSIVMTLAQCLKKL). A helical transmembrane segment spans residues 239-260 (FGAIALALFFLAVFSLLGMGLF). Over 261-339 (MGNLKHKCLR…PDNGFTSFDN (79 aa)) the chain is Extracellular. Cysteine 268 and cysteine 308 are oxidised to a cystine. N-linked (GlcNAc...) asparagine glycans are attached at residues asparagine 277, asparagine 282, asparagine 288, and asparagine 310. Residues 340-367 (FGWSLLAMFRLMTQDYPELLYHQILYAS) constitute an intramembrane region (pore-forming). Position 368 (glycine 368) is a topological domain, extracellular. A helical membrane pass occupies residues 369 to 408 (KVYMIFFVMISFWFAFYLTSLFLGILTMTYEKEKQRACEE). At 409-506 (SGGLDPKCQQ…EFADRVITHP (98 aa)) the chain is on the cytoplasmic side. The II repeat unit spans residues 488 to 757 (CSPCWVKLNE…QLAMARIKSG (270 aa)). Residues 507–522 (LADLFLVICIVLNICF) traverse the membrane as a helical segment. The Extracellular portion of the chain corresponds to 523–531 (LALEHFPMS). Residues 532 to 560 (EELRSLLHVGNLVFIGIYTIEMILKIIAM) form a helical membrane-spanning segment. The Cytoplasmic segment spans residues 561–569 (HPYGYFQIS). A helical membrane pass occupies residues 570-587 (WNIFDSILVVLELTEILL). Over 588-593 (ADVEGL) the chain is Extracellular. A helical transmembrane segment spans residues 594–609 (AVLITVPLIFIKLGKY). Topologically, residues 610-626 (GPPFKSLMRILGSSLMA) are cytoplasmic. Residues 627-655 (LKDLVLLLCIFVYFSAVFGMKLFGRSYKD) traverse the membrane as a helical segment. Residues 656 to 673 (CVCHIKEDCQPQRWHMSD) are Extracellular-facing. 2 disulfide bridges follow: cysteine 658–cysteine 664 and cysteine 696–cysteine 705. The segment at residues 674-700 (FLHAYMTVFRILCGEWIETLWECMEVA) is an intramembrane region (pore-forming). Glycine 701 is a topological domain (extracellular). A helical transmembrane segment spans residues 702–732 (QAWCIPFYMMVILIGNLLILYLFVTLVSSFS). Residues 733–934 (YYDATSEVNK…KTCCKIVENS (202 aa)) lie on the Cytoplasmic side of the membrane. Positions 806 to 834 (YKDQSSSTEKTPVTESESQSLIASPSASE) are enriched in polar residues. The tract at residues 806 to 875 (YKDQSSSTEK…MKQSSSSECS (70 aa)) is disordered. Serine 843 carries the phosphoserine modification. Residues 916 to 1224 (NGKIWKNIRK…KKQYRALKKL (309 aa)) form an III repeat. The helical transmembrane segment at 935–953 (WFECFIGLVTLLCTGTLAL) threads the bilayer. The Extracellular segment spans residues 954–961 (EDIYIDQR). The chain crosses the membrane as a helical span at residues 962–990 (KTTKILLEYADMIFAYIFILEMLLKWVAY). The Cytoplasmic portion of the chain corresponds to 991–998 (GFKAFFSN). A helical membrane pass occupies residues 999–1020 (NWYKLDFMVVIVFCLSLIGKTR). Residue glutamate 1021 is a topological domain, extracellular. Residues 1022 to 1040 (DLNPLTSIKFLRALRVLSQ) form a helical membrane-spanning segment. The Cytoplasmic portion of the chain corresponds to 1041-1055 (FERMKVVLRALIKTT). A helical membrane pass occupies residues 1056–1080 (LPTVSVFLVCLMIWLLFSVIGVQLF). Topologically, residues 1081 to 1127 (AGKFYECIDPTKGERFPVFEVMNKSQCEKLLFNESMPWENAKLNFDN) are extracellular. Cysteine 1087 and cysteine 1107 are joined by a disulfide. N-linked (GlcNAc...) asparagine glycans are attached at residues asparagine 1103 and asparagine 1113. Positions 1128-1154 (VGNGFLSLLQVATFNGWISIMNSAIDS) form an intramembrane region, pore-forming. The Extracellular segment spans residues 1155–1167 (VGVNMQPSFEYNL). Residues 1168 to 1202 (YMYSYFIIFVIFGLFLPLCMLIGVIIRNFNKQKIK) traverse the membrane as a helical segment. The Cytoplasmic portion of the chain corresponds to 1203 to 1250 (QGGSNIFITVKQKKQYRALKKLLYADVQKPTPRPRNKFQGFLFDLVTH). An IV repeat occupies 1233–1531 (TPRPRNKFQG…WNRFDPDRTQ (299 aa)). Residues 1251-1272 (RVFNVIIILLICFQATTIMIQK) form a helical membrane-spanning segment. At 1273–1276 (DEQS) the chain is on the extracellular side. Residues 1277 to 1305 (PQMETAIFWMNSIFVMLFTLECILKLTAF) traverse the membrane as a helical segment. Over 1306–1312 (RCHYFTS) the chain is Cytoplasmic. A helical membrane pass occupies residues 1313-1338 (AWNVHDFMVVIFSITGLLLPLTIGQY). The Extracellular portion of the chain corresponds to 1339–1341 (FVP). A helical membrane pass occupies residues 1342 to 1362 (PSLVQLILLSRVIHILRPGKG). Over 1363–1377 (PKVFHDLMLPLILAL) the chain is Cytoplasmic. Residues 1378-1402 (PALLNISLLIFLVMFIYAIFGMYNF) form a helical membrane-spanning segment. Residues 1403 to 1420 (AYVKKEAGINDVSNFETF) lie on the Extracellular side of the membrane. Positions 1421 to 1444 (GSSMLCLFQVTTFSGWDGMLDAIF) form an intramembrane region, pore-forming. Residues 1445–1468 (NSQWSDCDPDKINPGTQVKGDCGS) are Extracellular-facing. Cysteine 1451 and cysteine 1466 form a disulfide bridge. Residues 1469–1504 (PSVGISYFVSYILISWLIIVNMYIVLIMEFLSIPSQ) form a helical membrane-spanning segment. Topologically, residues 1505–1681 (KKSRTLSEDD…EEKASIQTQI (177 aa)) are cytoplasmic. Over residues 1647-1662 (NVSDTPAIDDRRDDLT) the composition is skewed to basic and acidic residues. Residues 1647–1681 (NVSDTPAIDDRRDDLTSKGAHSGKIEEKASIQTQI) are disordered.

Belongs to the sodium channel (TC 1.A.1.10) family. SCN7A subfamily. As to quaternary structure, the sodium channel formed by SCN7A is probably a heterooligomeric complex consisting of the ion conducting pore forming alpha subunit SCN7A and regulatory beta subunits such as SCN3B. Interacts with ATP1A1; activates ATP1A1 and thereby indirectly signals to nearby neurons to regulate sodium homeostasis. As to expression, not tissue specific but widely expressed. Expressed in regions of the central nervous system that control body fluid ionic balance.

It is found in the cell membrane. It catalyses the reaction Na(+)(in) = Na(+)(out). Its function is as follows. Sodium leak channel functioning as an osmosensor regulating sodium ion levels in various tissues and organs. While most sodium channels are voltage-gated, SCN7A is not and lets sodium flow through membrane along its concentration gradient. In glial cells of the central nervous system, senses body-fluid sodium levels and controls salt intake behavior as well as voluntary water intake through activation of nearby neurons to maintain appropriate sodium levels in the body. By mediating sodium influx into keratinocytes, also plays a role in skin barrier homeostasis. The protein is Sodium channel protein type 7 subunit alpha of Mus musculus (Mouse).